A 482-amino-acid chain; its full sequence is Signal recognition particle protein (482 aa).

Residues 107–114 (GLQGTGKT), 189–193 (DTAGR), and 247–250 (TKLD) each bind GTP. Disordered regions lie at residues 380-413 (MTTE…TDVS) and 452-482 (FGGQ…FGQL). Gly residues predominate over residues 452-468 (FGGQPGPGFRGYRGGGG). Positions 469–482 (KPKKKKKKKGFGQL) are enriched in basic residues.

Belongs to the GTP-binding SRP family. SRP54 subfamily. Part of the signal recognition particle protein translocation system, which is composed of SRP and FtsY.

It localises to the cytoplasm. The catalysed reaction is GTP + H2O = GDP + phosphate + H(+). Involved in targeting and insertion of nascent membrane proteins into the cytoplasmic membrane. Binds to the hydrophobic signal sequence of the ribosome-nascent chain (RNC) as it emerges from the ribosomes. The SRP-RNC complex is then targeted to the cytoplasmic membrane where it interacts with the SRP receptor FtsY. This is Signal recognition particle protein from Synechocystis sp. (strain ATCC 27184 / PCC 6803 / Kazusa).